The chain runs to 342 residues: uncharacterized protein (342 aa).

This sequence belongs to the bacterial luciferase oxidoreductase family.

This is an uncharacterized protein from Sinorhizobium fredii (strain NBRC 101917 / NGR234).